The sequence spans 413 residues: Hemocyanin type 2 unit e (413 aa).

N17 carries N-linked (GlcNAc...) (high mannose) asparagine glycosylation. H49 contacts Cu cation. C55 and C66 are oxidised to a cystine. A cross-link (2'-(S-cysteinyl)-histidine (Cys-His)) is located at residues 67–69 (CVH). Cu cation is bound by residues H69 and H78. The N-linked (GlcNAc...) (high mannose) asparagine glycan is linked to N127. Disulfide bonds link C179-C246 and C336-C342. 3 residues coordinate Cu cation: H189, H193, and H220.

The protein belongs to the tyrosinase family. Hemocyanin subfamily. In terms of assembly, decamers of large identical subunits, each containing 8 globular oxygen-binding functional units. The cofactor is Cu(2+). In terms of tissue distribution, hemolymph.

Its subcellular location is the secreted. It is found in the extracellular space. In terms of biological role, hemocyanins are copper-containing oxygen carriers occurring freely dissolved in the hemolymph of many mollusks and arthropods. The chain is Hemocyanin type 2 unit e from Rapana venosa (Veined rapa whelk).